The sequence spans 188 residues: M-phase phosphoprotein 6 homolog (188 aa).

A disordered region spans residues 93–188; the sequence is EENVDEKDVS…NKNKKKKKRN (96 aa). A compositionally biased stretch (basic and acidic residues) spans 120–149; the sequence is LTERERRKQELVSKKAEASRKMEVKAPAKE. A Phosphoserine modification is found at S167. The segment covering 174–188 has biased composition (basic residues); the sequence is RKTKKNKNKKKKKRN.

This sequence belongs to the MPP6 family. As to quaternary structure, associates with the RNA exosome complex.

It localises to the nucleus. RNA-binding protein that associates with the RNA exosome complex. The sequence is that of M-phase phosphoprotein 6 homolog from Schizosaccharomyces pombe (strain 972 / ATCC 24843) (Fission yeast).